The following is a 795-amino-acid chain: Volume-regulated anion channel subunit LRRC8E (795 aa).

Residues 1–22 (MIPVAEFKQFTEQQPAFKVLKP) lie on the Cytoplasmic side of the membrane. A helical membrane pass occupies residues 23–43 (WWDVLAEYLTVAMLMIGVFGC). The Extracellular portion of the chain corresponds to 44–116 (TLQVTQDKII…YETALHWYAK (73 aa)). A disulfide bridge connects residues C54 and C300. N-linked (GlcNAc...) asparagine glycosylation is present at N63. The helical transmembrane segment at 117–137 (YFPYLVVIHTLIFMVCTSFWF) threads the bilayer. Topologically, residues 138-264 (KFPGTSSKIE…IRQTVLKVCK (127 aa)) are cytoplasmic. A helical transmembrane segment spans residues 265–285 (FFAILVYNLIYVEKISFLVAC). Over 286–312 (RVETSEITGYASFCCNHTKAHLFSKLA) the chain is Extracellular. The N-linked (GlcNAc...) asparagine glycan is linked to N301. The chain crosses the membrane as a helical span at residues 313–333 (FCYISFVCVYGITCLYTLYWL). At 334-795 (FHRPLKEYSF…AEVREKMEEE (462 aa)) the chain is on the cytoplasmic side. 10 LRR repeats span residues 535-556 (QLKV…TDVA), 558-578 (HLQR…NSLK), 582-603 (VLRE…IFSL), 605-626 (ALQE…LSFQ), 630-651 (KLVT…VRKL), 653-674 (SLEQ…LGQC), 676-697 (GLRL…LGLL), 699-720 (SLQH…LFFC), 722-744 (KLRT…AALQ), and 745-766 (ALSR…LGDC).

The protein belongs to the LRRC8 family. Heterohexamer; oligomerizes with other LRRC8 proteins (LRRC8A, LRRC8C, LRRC8D and/or LRRC8B) to form a heterohexamer. In vivo, the subunit composition may depend primarily on expression levels, and heterooligomeric channels containing various proportions of the different LRRC8 proteins may coexist.

Its subcellular location is the cell membrane. The protein localises to the endoplasmic reticulum membrane. The protein resides in the lysosome membrane. It carries out the reaction chloride(in) = chloride(out). The catalysed reaction is iodide(out) = iodide(in). It catalyses the reaction taurine(out) = taurine(in). The enzyme catalyses 2',3'-cGAMP(out) = 2',3'-cGAMP(in). Its function is as follows. Non-essential component of the volume-regulated anion channel (VRAC, also named VSOAC channel), an anion channel required to maintain a constant cell volume in response to extracellular or intracellular osmotic changes. The VRAC channel conducts iodide better than chloride and can also conduct organic osmolytes like taurine. Mediates efflux of amino acids, such as aspartate, in response to osmotic stress. The VRAC channel also mediates transport of immunoreactive cyclic dinucleotide GMP-AMP (2'-3'-cGAMP), an immune messenger produced in response to DNA virus in the cytosol. Channel activity requires LRRC8A plus at least one other family member (LRRC8B, LRRC8C, LRRC8D or LRRC8E); channel characteristics depend on the precise subunit composition. Also plays a role in lysosome homeostasis by forming functional lysosomal VRAC channels in response to low cytoplasmic ionic strength condition: lysosomal VRAC channels are necessary for the formation of large lysosome-derived vacuoles, which store and then expel excess water to maintain cytosolic water homeostasis. This chain is Volume-regulated anion channel subunit LRRC8E, found in Mus musculus (Mouse).